Consider the following 725-residue polypeptide: Exocyst complex component 8 (725 aa).

Phosphoserine is present on S19. The segment at 137 to 159 is disordered; it reads AGFFSTPGGASRDGSGPGEEGKQ. At T142 the chain carries Phosphothreonine. The 101-residue stretch at 182 to 282 folds into the PH domain; the sequence is YLVYNGDLVE…WLEVLEDTKR (101 aa). A disordered region spans residues 285 to 328; it reads SEKRRREQEEAAAPRGPPQVTSKATNPFEDDEEEEPAVPEVEEE. Over residues 312 to 328 the composition is skewed to acidic residues; the sequence is FEDDEEEEPAVPEVEEE.

This sequence belongs to the EXO84 family. In terms of assembly, the exocyst complex is composed of EXOC1, EXOC2, EXOC3, EXOC4, EXOC5, EXOC6, EXOC7 and EXOC8. Interacts (via PH domain) with GTP-bound RALA and RALB. Interacts with SH3BP1; required for the localization of both SH3BP1 and the exocyst to the leading edge of migrating cells.

It is found in the cytoplasm. It localises to the perinuclear region. Its subcellular location is the cell projection. The protein resides in the growth cone. Its function is as follows. Component of the exocyst complex involved in the docking of exocytic vesicles with fusion sites on the plasma membrane. In Homo sapiens (Human), this protein is Exocyst complex component 8 (EXOC8).